Consider the following 432-residue polypeptide: uncharacterized protein (432 aa).

Residue lysine 243 is modified to N6-(pyridoxal phosphate)lysine.

The protein belongs to the class-II pyridoxal-phosphate-dependent aminotransferase family. Pyridoxal 5'-phosphate serves as cofactor.

The protein resides in the cytoplasm. This is an uncharacterized protein from Methanocaldococcus jannaschii (strain ATCC 43067 / DSM 2661 / JAL-1 / JCM 10045 / NBRC 100440) (Methanococcus jannaschii).